The primary structure comprises 295 residues: Ethanolamine ammonia-lyase small subunit (295 aa).

Residues V207, E228, and C258 each contribute to the adenosylcob(III)alamin site.

It belongs to the EutC family. As to quaternary structure, the basic unit is a heterodimer which dimerizes to form tetramers. The heterotetramers trimerize; 6 large subunits form a core ring with 6 small subunits projecting outwards. The cofactor is adenosylcob(III)alamin.

It is found in the bacterial microcompartment. It carries out the reaction ethanolamine = acetaldehyde + NH4(+). It functions in the pathway amine and polyamine degradation; ethanolamine degradation. In terms of biological role, catalyzes the deamination of various vicinal amino-alcohols to oxo compounds. Allows this organism to utilize ethanolamine as the sole source of nitrogen and carbon in the presence of external vitamin B12. In Escherichia coli (strain SE11), this protein is Ethanolamine ammonia-lyase small subunit.